The chain runs to 505 residues: AMP phosphorylase 2 (505 aa).

AMP is bound by residues glycine 169, 195 to 200 (SRAITT), threonine 204, serine 265, and lysine 289.

Belongs to the thymidine/pyrimidine-nucleoside phosphorylase family. Type 2 subfamily.

The enzyme catalyses AMP + phosphate = alpha-D-ribose 1,5-bisphosphate + adenine. It carries out the reaction CMP + phosphate = cytosine + alpha-D-ribose 1,5-bisphosphate. It catalyses the reaction UMP + phosphate = alpha-D-ribose 1,5-bisphosphate + uracil. Catalyzes the conversion of AMP and phosphate to adenine and ribose 1,5-bisphosphate (R15P). Exhibits phosphorylase activity toward CMP and UMP in addition to AMP. Functions in an archaeal AMP degradation pathway, together with R15P isomerase and RubisCO. The protein is AMP phosphorylase 2 of Archaeoglobus fulgidus (strain ATCC 49558 / DSM 4304 / JCM 9628 / NBRC 100126 / VC-16).